The following is a 780-amino-acid chain: Translation initiation factor IF-2 (780 aa).

Residues 44-194 (RQLDNAVDGT…TPPKPKELPE (151 aa)) are disordered. The span at 53-65 (TNKKAEAPKKETT) shows a compositional bias: basic and acidic residues. Residues 66 to 81 (SNENGNSKGPNKPNMT) show a composition bias toward polar residues. 2 stretches are compositionally biased toward low complexity: residues 82 to 93 (NSNEKSNKPNKP) and 117 to 168 (ANTS…NNKG). Residues 281 to 450 (ERPPVVTIMG…LLVSEVEELK (170 aa)) form the tr-type G domain. A G1 region spans residues 290-297 (GHVDHGKT). Residue 290–297 (GHVDHGKT) participates in GTP binding. The tract at residues 315–319 (GITQH) is G2. Residues 336-339 (DTPG) are G3. Residues 336 to 340 (DTPGH) and 390 to 393 (NKID) each bind GTP. A G4 region spans residues 390-393 (NKID). A G5 region spans residues 426–428 (SAK).

This sequence belongs to the TRAFAC class translation factor GTPase superfamily. Classic translation factor GTPase family. IF-2 subfamily.

It localises to the cytoplasm. One of the essential components for the initiation of protein synthesis. Protects formylmethionyl-tRNA from spontaneous hydrolysis and promotes its binding to the 30S ribosomal subunits. Also involved in the hydrolysis of GTP during the formation of the 70S ribosomal complex. The protein is Translation initiation factor IF-2 of Listeria welshimeri serovar 6b (strain ATCC 35897 / DSM 20650 / CCUG 15529 / CIP 8149 / NCTC 11857 / SLCC 5334 / V8).